Here is a 119-residue protein sequence, read N- to C-terminus: Large ribosomal subunit protein bL17 (119 aa).

This sequence belongs to the bacterial ribosomal protein bL17 family. Part of the 50S ribosomal subunit. Contacts protein L32.

This chain is Large ribosomal subunit protein bL17, found in Malacoplasma penetrans (strain HF-2) (Mycoplasma penetrans).